The chain runs to 215 residues: Ras-related protein Rab-5B (215 aa).

Thr2 is subject to N-acetylthreonine. GTP-binding residues include Ser29, Ala30, Gly32, Lys33, Ser34, Ser35, His46, Glu47, Thr52, and Gly78. Ser34 contacts Mg(2+). 2 short sequence motifs (switch) span residues 44-56 (QFHE…IGAA) and 77-93 (AGQE…YRGA). Thr52 serves as a coordination point for Mg(2+). Ser84 carries the phosphoserine; by LRRK2 modification. 5 residues coordinate GTP: Asn133, Lys134, Asp136, Ala164, and Lys165. The disordered stretch occupies residues 186–215 (PQNLGGAAGRSRGVDLHEQSQQNKSQCCSN). A compositionally biased stretch (low complexity) spans 204–215 (QSQQNKSQCCSN). 2 S-geranylgeranyl cysteine lipidation sites follow: Cys212 and Cys213.

The protein belongs to the small GTPase superfamily. Rab family. As to quaternary structure, binds EEA1. Interacts with RIN2 and RIN3, which probably regulate its pathway, possibly by acting as GEFs. Interacts with GDI1, GDI2, CHML and CHM; phosphorylation at Ser-84 disrupts this interaction. Mg(2+) is required as a cofactor. Post-translationally, phosphorylation of Ser-84 in the switch II region by LRRK2 prevents the association of RAB regulatory proteins, including CHM, CHML and RAB GDP dissociation inhibitors GDI1 and GDI2. In terms of processing, (Microbial infection) Glycosylated on arginine residues by S.typhimurium protein Ssek3.

Its subcellular location is the cell membrane. The protein localises to the early endosome membrane. The protein resides in the melanosome. The catalysed reaction is GTP + H2O = GDP + phosphate + H(+). Its activity is regulated as follows. Regulated by guanine nucleotide exchange factors (GEFs) which promote the exchange of bound GDP for free GTP. Regulated by GTPase activating proteins (GAPs) which increase the GTP hydrolysis activity. Inhibited by GDP dissociation inhibitors (GDIs). The small GTPases Rab are key regulators of intracellular membrane trafficking, from the formation of transport vesicles to their fusion with membranes. Rabs cycle between an inactive GDP-bound form and an active GTP-bound form that is able to recruit to membranes different sets of downstream effectors directly responsible for vesicle formation, movement, tethering and fusion. The chain is Ras-related protein Rab-5B from Homo sapiens (Human).